A 314-amino-acid chain; its full sequence is 3'-5' exoribonuclease YhaM (314 aa).

In terms of domain architecture, HD spans 163–279; it reads HVVSMLDLAK…LHYIDNLDAK (117 aa).

It belongs to the YhaM family.

Its function is as follows. Shows a 3'-5' exoribonuclease activity. The polypeptide is 3'-5' exoribonuclease YhaM (Bacillus anthracis (strain CDC 684 / NRRL 3495)).